The primary structure comprises 90 residues: UPF0237 protein MK1213 (90 aa).

The ACT domain occupies 5 to 79; sequence VVTVIGADRP…EELGVDVIVQ (75 aa).

This sequence belongs to the UPF0237 family.

This is UPF0237 protein MK1213 from Methanopyrus kandleri (strain AV19 / DSM 6324 / JCM 9639 / NBRC 100938).